The sequence spans 431 residues: Argininosuccinate lyase (431 aa).

The protein belongs to the lyase 1 family. Argininosuccinate lyase subfamily.

The protein localises to the cytoplasm. It catalyses the reaction 2-(N(omega)-L-arginino)succinate = fumarate + L-arginine. The protein operates within amino-acid biosynthesis; L-arginine biosynthesis; L-arginine from L-ornithine and carbamoyl phosphate: step 3/3. The protein is Argininosuccinate lyase of Xanthomonas campestris pv. campestris (strain B100).